A 961-amino-acid chain; its full sequence is Cytochrome b5-like reductase apf12 (961 aa).

A298 is an FAD binding site. An FAD-binding FR-type domain is found at 429 to 548 (ARPQVDAFAW…IKPAPHFRIA (120 aa)). NADP(+)-binding positions include 453 to 456 (SRIQ), 499 to 500 (SK), and G753. A Cytochrome b5 heme-binding domain is found at 716-793 (LNQITKLELA…LNEMVIGRLD (78 aa)). Position 753 to 755 (753 to 755 (GGE)) interacts with FAD.

Belongs to the flavoprotein pyridine nucleotide cytochrome reductase family. Requires FAD as cofactor.

Its pathway is secondary metabolite biosynthesis. Cytochrome b5-like reductase; part of the gene cluster that mediates the biosynthesis of the cyclic tetrapeptide apicidin F (APF). The non-ribosomal peptide synthetase apf1 incorporates four different amino acids to produce apicidin F: L-phenylalanine, D-pipecolic acid (D-pip), N-methoxy-L-tryptophan and L-2-aminooctanedioic acid. L-Phenylalanine is the only proteinogenic amino acid directly used by apf1. The 3 other apf1 substrates are non-proteinogenic and have to be modified by other enzymes of the cluster. Lysine is converted to delta-1-pyrroline-5-carboxylate (P5C) which is reduced to L-pipecolic acid (L-pip) by apf3. L-pip is epimerized to D-pip, probably by apf1 activity, prior to incorporation. L-Tryptophan is N-oxidyzed by one of the cytochrome P450 monooxygenases (apf7 or apf8), and further methylated at the hydroxy group by the O-methyltransferase apf6 to yield N-methoxy-L-tryptophan. The synthesis of the fourth apf1 substrate is more complex. The fatty acid synthase apf5 is involved in the synthesis of the octanoic acid backbone of L-2-aminooctanedioic acid by fixing one acetyl-CoA unit and three malonyl-CoA units. Then one of the cytochrome P450 monooxygenases (apf7 or apf8) may oxidize this backbone to 2-oxooctanoic acid. The aminotransferase apf4 is predicted to catalyze the exchange of the keto group with an amino group. The next step would be the oxidation of 2-aminooctanoic acid by one of the cytochrome P450 monooxygenases (apf7 or apf8). The last step is the oxidation of 2-amino-8-hydroxyoctanoic acid to 2-aminooctanedioic acid is catalyzed by the FAD-dependent monooxygenase apf9. This chain is Cytochrome b5-like reductase apf12, found in Gibberella fujikuroi (strain CBS 195.34 / IMI 58289 / NRRL A-6831) (Bakanae and foot rot disease fungus).